Here is a 285-residue protein sequence, read N- to C-terminus: HTH-type transcriptional regulator MurR (285 aa).

Residues 1-77 (MLYLTKISNA…MALIGEYSAS (77 aa)) enclose the HTH rpiR-type domain. Positions 37-56 (SRQMAKQLGISQSSIVKFAQ) form a DNA-binding region, H-T-H motif. The SIS domain occupies 128–268 (IIEVISKAPF…FVGLVQLNDV (141 aa)).

Homotetramer.

It participates in amino-sugar metabolism; N-acetylmuramate degradation [regulation]. Represses the expression of the murPQ operon involved in the uptake and degradation of N-acetylmuramic acid (MurNAc). Binds to two adjacent inverted repeats within the operator region. MurNAc 6-phosphate, the substrate of MurQ, is the specific inducer that weakens binding of MurR to the operator. This is HTH-type transcriptional regulator MurR from Escherichia coli O139:H28 (strain E24377A / ETEC).